Consider the following 184-residue polypeptide: Large ribosomal subunit protein uL6 (184 aa).

The protein belongs to the universal ribosomal protein uL6 family. Part of the 50S ribosomal subunit.

In terms of biological role, this protein binds to the 23S rRNA, and is important in its secondary structure. It is located near the subunit interface in the base of the L7/L12 stalk, and near the tRNA binding site of the peptidyltransferase center. This chain is Large ribosomal subunit protein uL6, found in Pyrococcus abyssi (strain GE5 / Orsay).